The sequence spans 189 residues: Dual specificity phosphatase 21 (189 aa).

The Tyrosine-protein phosphatase domain maps to 20 to 161 (GLSQITASLF…LIHYEFKLFS (142 aa)). Residues 43–128 (SNNHITTIIN…YLMKYHNMTL (86 aa)) are sufficient for mitochondrial localization. Cys-105 serves as the catalytic Phosphocysteine intermediate.

It belongs to the protein-tyrosine phosphatase family. Non-receptor class dual specificity subfamily. Microtubule inner protein component of sperm flagellar doublet microtubules. As to expression, selectively expressed in testis.

It localises to the cytoplasm. Its subcellular location is the nucleus. It is found in the mitochondrion inner membrane. The protein resides in the cytoskeleton. The protein localises to the flagellum axoneme. It catalyses the reaction O-phospho-L-tyrosyl-[protein] + H2O = L-tyrosyl-[protein] + phosphate. The catalysed reaction is O-phospho-L-seryl-[protein] + H2O = L-seryl-[protein] + phosphate. The enzyme catalyses O-phospho-L-threonyl-[protein] + H2O = L-threonyl-[protein] + phosphate. Its function is as follows. Protein phosphatase component of the sperm flagellar doublet microtubules. May act as a regulator of sperm motility by mediating dephosphorylation of sperm doublet microtubule proteins. Can dephosphorylate single and diphosphorylated synthetic MAPK peptides, with preference for the phosphotyrosine and diphosphorylated forms over phosphothreonine. This Mus musculus (Mouse) protein is Dual specificity phosphatase 21.